The following is a 122-amino-acid chain: Short coiled-coil protein (122 aa).

The segment at 1–26 (MDGLNTGEEEDSAFTSISLTDDTDHS) is disordered. Residues 43-101 (NADMDAVDAENQVELEEKTRLINQVLELQHTLEDLSARVDAVKEENLKLKSENQVLGQY) are a coiled coil.

Belongs to the SCOC family. Homodimer. Interacts with ARL1, ARL2 and ARL3. Directly interacts with FEZ1 and UVRAG. The interaction with UVRAG is reduced by amino acid starvation, but the complex is stabilized in the presence of FEZ1. Interacts with NRBF2.

It localises to the golgi apparatus membrane. Its subcellular location is the golgi apparatus. It is found in the trans-Golgi network. The protein localises to the cytoplasm. The protein resides in the cytosol. In terms of biological role, positive regulator of amino acid starvation-induced autophagy. The chain is Short coiled-coil protein (Scoc) from Rattus norvegicus (Rat).